The sequence spans 74 residues: Anaphase-promoting complex subunit 13 (74 aa).

Residues 33 to 53 (LNELPEPEQDNGGTTESVKEQ) are disordered.

It belongs to the APC13 family. As to quaternary structure, the mammalian APC/C is composed at least of 14 distinct subunits ANAPC1, ANAPC2, CDC27/APC3, ANAPC4, ANAPC5, CDC16/APC6, ANAPC7, CDC23/APC8, ANAPC10, ANAPC11, CDC26/APC12, ANAPC13, ANAPC15 and ANAPC16 that assemble into a complex of at least 19 chains with a combined molecular mass of around 1.2 MDa; APC/C interacts with FZR1 and FBXO5.

It localises to the nucleus. It participates in protein modification; protein ubiquitination. In terms of biological role, component of the anaphase promoting complex/cyclosome (APC/C), a cell cycle-regulated E3 ubiquitin ligase that controls progression through mitosis and the G1 phase of the cell cycle. The APC/C complex acts by mediating ubiquitination and subsequent degradation of target proteins: it mainly mediates the formation of 'Lys-11'-linked polyubiquitin chains and, to a lower extent, the formation of 'Lys-48'- and 'Lys-63'-linked polyubiquitin chains. The APC/C complex catalyzes assembly of branched 'Lys-11'-/'Lys-48'-linked branched ubiquitin chains on target proteins. The polypeptide is Anaphase-promoting complex subunit 13 (ANAPC13) (Bos taurus (Bovine)).